A 244-amino-acid polypeptide reads, in one-letter code: U11/U12 small nuclear ribonucleoprotein 35 kDa protein (244 aa).

The RRM domain occupies 51 to 129 (LTLFVARLNL…HEIFVDYELE (79 aa)). Positions 146–162 (GKKESGQLRFGGRDRPF) are enriched in basic and acidic residues. The disordered stretch occupies residues 146–244 (GKKESGQLRF…KSRDKRDRSK (99 aa)). Lysine 172 is covalently cross-linked (Glycyl lysine isopeptide (Lys-Gly) (interchain with G-Cter in SUMO2)). Composition is skewed to basic and acidic residues over residues 173–185 (NEPH…ERRE) and 192–244 (RHWD…DRSK).

As to quaternary structure, component of the U11/U12 snRNPs that are part of the U12-type spliceosome.

It localises to the nucleus. The sequence is that of U11/U12 small nuclear ribonucleoprotein 35 kDa protein (Snrnp35) from Mus musculus (Mouse).